The following is a 164-amino-acid chain: Putative pre-16S rRNA nuclease (164 aa).

The protein belongs to the YqgF nuclease family.

It localises to the cytoplasm. Could be a nuclease involved in processing of the 5'-end of pre-16S rRNA. The sequence is that of Putative pre-16S rRNA nuclease from Rhizobium johnstonii (strain DSM 114642 / LMG 32736 / 3841) (Rhizobium leguminosarum bv. viciae).